Reading from the N-terminus, the 977-residue chain is Kinesin-like protein KIN-7L, chloroplastic (977 aa).

Polar residues predominate over residues 1–12; sequence MGSKQVSKTRNG. Positions 1 to 66 are disordered; sequence MGSKQVSKTR…PPKPLQSKEN (66 aa). Composition is skewed to low complexity over residues 22 to 31 and 38 to 54; these read SSASSTTSSS and SVDS…RSKP. The Kinesin motor domain maps to 66–385; that stretch reads NVTVTVRFRP…LKFAHRAKHI (320 aa). Position 146-153 (146-153) interacts with ATP; sequence GVTSSGKT. A coiled-coil region spans residues 386–471; the sequence is EIQAAQNKII…LTKLILVSNK (86 aa). Positions 549–589 are disordered; the sequence is DSSLGGSSLSDKSSAVKSNSTPSTPQGEGSDFHTESRLSEG. The span at 551 to 561 shows a compositional bias: low complexity; it reads SLGGSSLSDKS. The segment covering 563–575 has biased composition (polar residues); it reads AVKSNSTPSTPQG. 2 coiled-coil regions span residues 626–688 and 732–942; these read MEIL…GKQI and IQEQ…LENE. A compositionally biased stretch (polar residues) spans 864-876; that stretch reads SSVTTPQGKTGNL. 2 disordered regions span residues 864–891 and 958–977; these read SSVT…KEQE and AANS…HFGT. Residues 879–891 show a composition bias toward basic and acidic residues; the sequence is GRRESVSKRKEQE. Positions 958-967 are enriched in polar residues; it reads AANSGLSDSV. The span at 968–977 shows a compositional bias: basic and acidic residues; that stretch reads SETRIEHFGT.

Belongs to the TRAFAC class myosin-kinesin ATPase superfamily. Kinesin family. KIN-7 subfamily.

The protein resides in the plastid. Its subcellular location is the chloroplast. The sequence is that of Kinesin-like protein KIN-7L, chloroplastic from Arabidopsis thaliana (Mouse-ear cress).